Here is a 1475-residue protein sequence, read N- to C-terminus: Nuclear pore complex protein Nup153 (1475 aa).

A compositionally biased stretch (gly residues) spans 1 to 15; that stretch reads MASGAGGVGGGGGGK. Disordered stretches follow at residues 1-37, 90-124, and 171-225; these read MASG…QQHQ, DEES…NYPD, and DSTS…TATS. A2 carries the post-translational modification N-acetylalanine. Residue T102 is modified to Phosphothreonine. 2 stretches are compositionally biased toward polar residues: residues 107–121 and 181–190; these read VSNT…TASN and ISTTSGFSSR. S182, S185, S192, S203, and S209 each carry phosphoserine. The stretch at 236-237 is repeat 1; that stretch reads FG. Residues 236-1418 form a 29 X 2 AA repeats of F-G region; sequence FGTLSPSLGN…NSPSGVFTFG (1183 aa). S240, S257, S297, S320, S330, S333, S334, S338, and S343 each carry phosphoserine. K353 participates in a covalent cross-link: Glycyl lysine isopeptide (Lys-Gly) (interchain with G-Cter in SUMO2). At T369 the chain carries Phosphothreonine. An N6-acetyllysine modification is found at K384. Phosphothreonine is present on T388. S500, S516, S518, S522, and S529 each carry phosphoserine. Residues S534 and S544 are each glycosylated (O-linked (GlcNAc) serine). T588 bears the Phosphothreonine mark. Phosphoserine is present on residues S607, S614, S619, and S633. Repeat unit 2 spans residues 652-653; it reads FG. The RanBP2-type 1 zinc-finger motif lies at 657 to 687; sequence KAGSSWQCDTCLLQNKVTDNKCIACQAAKLS. The Zn(2+) site is built by C664, C667, C678, and C681. Phosphoserine is present on S687. Repeat 3 spans residues 715-716; it reads FG. An N6-acetyllysine modification is found at K718. The RanBP2-type 2 zinc finger occupies 722 to 751; it reads VIGTWDCDTCLVQNKPEAIKCVACETPKPG. Zn(2+)-binding residues include C728, C731, C742, and C745. Copy 4 of the repeat occupies 786-787; that stretch reads FG. 2 consecutive RanBP2-type zinc fingers follow at residues 793 to 822 and 851 to 880; these read PIGS…EKPG and PEGS…AKPG. C799, C802, C813, C816, C857, C860, C871, and C874 together coordinate Zn(2+). A Phosphoserine modification is found at S891. Residues 905-906 form repeat 5; that stretch reads FG. 2 O-linked (GlcNAc) serine glycosylation sites follow: S908 and S909. Copy 6 of the repeat occupies 926-927; the sequence is FG. Position 954 is an N6-acetyllysine (K954). A run of 5 repeats spans residues 961-962, 983-984, 1000-1001, 1024-1025, and 1084-1085. Residue S1113 is glycosylated (O-linked (GlcNAc) serine). A run of 2 repeats spans residues 1118–1119 and 1135–1136. Residues 1128–1167 are disordered; it reads KCQPVFSFGNSEQTKDENSSKSTFSFSMTKPSEKESEQPA. A compositionally biased stretch (low complexity) spans 1147-1157; it reads SKSTFSFSMTK. Residue T1156 is glycosylated (O-linked (GlcNAc) threonine). A run of 11 repeats spans residues 1173–1174, 1212–1213, 1228–1229, 1240–1241, 1275–1276, 1289–1290, 1291–1292, 1306–1307, 1319–1320, 1327–1328, and 1341–1342. The segment at 1311-1402 is disordered; it reads SAPSASPAFG…SAFQFGSSTT (92 aa). Residues 1321 to 1335 are compositionally biased toward polar residues; it reads ANQTPTFGQSQGASQ. Composition is skewed to polar residues over residues 1343 to 1356 and 1363 to 1396; these read SISS…TGSQ and GTVS…SAFQ. Residues 1350–1475 are (Microbial infection) Interacts with HIV-1 capsid protein p24 (CA); that stretch reads LFPTGSQPAP…KIKTAVRRRK (126 aa). 5 tandem repeats follow at residues 1362–1363, 1374–1375, 1383–1384, 1397–1398, and 1417–1418. 2 stretches are compositionally biased toward polar residues: residues 1420-1431 and 1438-1463; these read NSSTPAASAQPS and FNQS…TSFS. The disordered stretch occupies residues 1420 to 1475; sequence NSSTPAASAQPSGSGGFPFNQSPAAFTVGSNGKNVFSSSGTSFSGRKIKTAVRRRK. 3 positions are modified to phosphoserine: S1457, S1461, and S1463. A compositionally biased stretch (basic residues) spans 1465-1475; sequence RKIKTAVRRRK.

The protein belongs to the NUP153 family. Part of the nuclear pore complex (NPC). Interacts with TPR (via coiled coil region); the interaction is direct and provides a link between the core structure and the TPR-containing nuclear basket of the nuclear pore complex (NPC). Interacts with HIKESHI. Interacts with SENP2. Interacts with XPO5. Interacts with RAN; the interaction occurs in a GTP- and GDP-independent manner. Interacts with MCM3AP isoform GANP; this interaction is required for GANP localization at the nuclear pore complex. Interacts with MAPK1. As to quaternary structure, (Microbial infection) Interacts (via C-terminus) with HIV-1 capsid protein p24 (CA) (via N-terminus). In terms of assembly, (Microbial infection) Interacts with HIV-1 integrase; this interaction might play a role in nuclear import of HIV pre-integration complex. (Microbial infection) Interacts with hepatitis B virus capsid protein; this interaction probably plays a role in nuclear import of HBV genome. As to quaternary structure, (Microbial infection) Interacts with Epstein-barr virus BGLF4; this interaction allows BGLF4 nuclear entry. In terms of assembly, (Microbial infection) Interacts with HIV-2 virus protein vpx; this interaction might promote vpx nuclear entry. Zn(2+) serves as cofactor. In terms of processing, phosphorylated in interphase, hyperphosphorylated during mitosis. May play a role in the reversible disassembly of the nuclear pore complex during mitosis. Post-translationally, proteolytically degraded after poliovirus (PV) infection; degradation is partial and NCP- and TPR-binding domains withstand degradation. O-glycosylated during cytokinesis at sites identical or close to phosphorylation sites, this interferes with the phosphorylation status.

It is found in the nucleus. The protein resides in the nucleus membrane. Its subcellular location is the nuclear pore complex. In terms of biological role, component of the nuclear pore complex (NPC), a complex required for the trafficking across the nuclear envelope. Functions as a scaffolding element in the nuclear phase of the NPC essential for normal nucleocytoplasmic transport of proteins and mRNAs. Involved in the quality control and retention of unspliced mRNAs in the nucleus; in association with TPR, regulates the nuclear export of unspliced mRNA species bearing constitutive transport element (CTE) in a NXF1- and KHDRBS1-independent manner. Mediates TPR anchoring to the nuclear membrane at NPC. The repeat-containing domain may be involved in anchoring other components of the NPC to the pore membrane. Possible DNA-binding subunit of the nuclear pore complex (NPC). Functionally, (Microbial infection) Interacts with HIV-1 caspid protein P24 and thereby promotes the integration of the virus in the nucleus of non-dividing cells (in vitro). (Microbial infection) Binds HIV-2 protein vpx and thereby promotes the nuclear translocation of the lentiviral genome (in vitro). The sequence is that of Nuclear pore complex protein Nup153 (NUP153) from Homo sapiens (Human).